Here is a 907-residue protein sequence, read N- to C-terminus: Translation initiation factor IF-2 (907 aa).

The interval 26–317 is disordered; it reads DAGMKKSSSD…KPKSMQHGFD (292 aa). Basic and acidic residues-rich tracts occupy residues 28–44 and 101–248; these read GMKK…EKQK and SAIE…DTDY. Over residues 299-308 the composition is skewed to basic residues; it reads KGGRKGKLSK. Residues 406–575 form the tr-type G domain; the sequence is PRAPVVTIMG…LLQAEVLELT (170 aa). Residues 415–422 are G1; that stretch reads GHVDHGKT. 415–422 provides a ligand contact to GTP; that stretch reads GHVDHGKT. The segment at 440-444 is G2; that stretch reads GITQH. Residues 461-464 form a G3 region; that stretch reads DTPG. Residues 461 to 465 and 515 to 518 each bind GTP; these read DTPGH and NKID. The G4 stretch occupies residues 515–518; it reads NKID. Positions 551 to 553 are G5; that stretch reads SAK.

It belongs to the TRAFAC class translation factor GTPase superfamily. Classic translation factor GTPase family. IF-2 subfamily.

The protein resides in the cytoplasm. One of the essential components for the initiation of protein synthesis. Protects formylmethionyl-tRNA from spontaneous hydrolysis and promotes its binding to the 30S ribosomal subunits. Also involved in the hydrolysis of GTP during the formation of the 70S ribosomal complex. The sequence is that of Translation initiation factor IF-2 from Vibrio vulnificus (strain CMCP6).